The following is a 1040-amino-acid chain: Multidrug resistance protein MdtB (1040 aa).

The next 12 membrane-spanning stretches (helical) occupy residues 16-36 (FIMR…AGII), 347-367 (LMMA…NIPA), 369-389 (IIPG…MVFL), 396-416 (LTLM…IVVI), 440-460 (IGFT…PLLF), 472-492 (FAIT…TLTP), 537-557 (WLTL…WVFI), 863-883 (LGST…VLGI), 888-908 (FIHP…ALLA), 911-931 (IAGS…IGIV), 968-988 (ILMT…STGV), and 998-1018 (IGMV…TPVI).

The protein belongs to the resistance-nodulation-cell division (RND) (TC 2.A.6) family. MdtB subfamily. As to quaternary structure, part of a tripartite efflux system composed of MdtA, MdtB and MdtC. MdtB forms a heteromultimer with MdtC.

The protein localises to the cell inner membrane. Its function is as follows. The MdtABC tripartite complex confers resistance against novobiocin and deoxycholate. The sequence is that of Multidrug resistance protein MdtB from Escherichia coli O7:K1 (strain IAI39 / ExPEC).